The following is a 657-amino-acid chain: uncharacterized protein (657 aa).

The N-terminal stretch at methionine 1–serine 26 is a signal peptide. Cysteine 27 carries N-palmitoyl cysteine lipidation. A lipid anchor (S-diacylglycerol cysteine) is attached at cysteine 27. Disordered regions lie at residues isoleucine 291–threonine 316, arginine 468–isoleucine 496, and lysine 516–asparagine 563. A compositionally biased stretch (polar residues) spans lysine 294–serine 304. Positions leucine 469 to isoleucine 495 are enriched in basic and acidic residues. The segment covering lysine 516–threonine 525 has biased composition (polar residues). Residues glutamate 526–glycine 545 are compositionally biased toward basic and acidic residues. A compositionally biased stretch (low complexity) spans lysine 546 to glycine 559.

To T.pallidum TmpC.

It is found in the cell membrane. This is an uncharacterized protein from Mycoplasma pneumoniae (strain ATCC 29342 / M129 / Subtype 1) (Mycoplasmoides pneumoniae).